Reading from the N-terminus, the 110-residue chain is Replication initiation control protein YabA (110 aa).

4 residues coordinate Zn(2+): histidine 84, cysteine 86, cysteine 100, and cysteine 103.

The protein belongs to the YabA family. As to quaternary structure, homotetramer. Interacts with both DnaA and DnaN, acting as a bridge between these two proteins. It depends on Zn(2+) as a cofactor.

It localises to the cytoplasm. The protein localises to the nucleoid. In terms of biological role, involved in control of chromosome replication initiation. Inhibits the cooperative binding of DnaA to the oriC region, thus negatively regulating initiation of chromosome replication. Inhibits the ability of DnaA-ATP to form a helix on DNA; does not disassemble preformed DnaA-DNA helices. Decreases the residence time of DnaA on the chromosome at its binding sites (oriC, replication forks and promoter-binding sites). Tethers DnaA to the replication machinery via the DNA polymerase beta sliding clamp subunit (dnaN). Associates with oriC and other DnaA targets on the chromosome in a DnaA-dependent manner. This is Replication initiation control protein YabA from Streptococcus mutans serotype c (strain ATCC 700610 / UA159).